Reading from the N-terminus, the 332-residue chain is Flotillin-like protein FloA (332 aa).

Residues 9-29 form a helical membrane-spanning segment; sequence FILIGGGIIFVVLFFHYVPFF.

It belongs to the flotillin-like FloA family. Homooligomerizes.

Its subcellular location is the cell membrane. The protein resides in the membrane raft. Found in functional membrane microdomains (FMM) that may be equivalent to eukaryotic membrane rafts. FMMs are highly dynamic and increase in number as cells age. Flotillins are thought to be important factors in membrane fluidity. This Phocaeicola vulgatus (strain ATCC 8482 / DSM 1447 / JCM 5826 / CCUG 4940 / NBRC 14291 / NCTC 11154) (Bacteroides vulgatus) protein is Flotillin-like protein FloA.